The chain runs to 301 residues: Averufin oxidase A (301 aa).

Residues 1 to 23 form the signal peptide; the sequence is MPTYALLGATGATGSAILRCLLA. N-linked (GlcNAc...) asparagine glycans are attached at residues Asn-62, Asn-86, and Asn-190.

This sequence belongs to the avfA family.

It functions in the pathway mycotoxin biosynthesis. Functionally, averufin oxidase A; part of the fragmented gene cluster that mediates the biosynthesis of dothistromin (DOTH), a polyketide toxin very similar in structure to the aflatoxin precursor, versicolorin B. The first step of the pathway is the conversion of acetate to norsolorinic acid (NOR) and requires the fatty acid synthase subunits hexA and hexB, as well as the polyketide synthase pksA. PksA combines a hexanoyl starter unit and 7 malonyl-CoA extender units to synthesize the precursor NOR. The hexanoyl starter unit is provided to the acyl-carrier protein (ACP) domain by the fungal fatty acid synthase hexA/hexB. The second step is the conversion of NOR to averantin (AVN) and requires the norsolorinic acid ketoreductase nor1, which catalyzes the dehydration of norsolorinic acid to form (1'S)-averantin. The cytochrome P450 monooxygenase avnA then catalyzes the hydroxylation of AVN to 5'hydroxyaverantin (HAVN). The next step is performed by adhA that transforms HAVN to averufin (AVF). Averufin might then be converted to hydroxyversicolorone by cypX and avfA. Hydroxyversicolorone is further converted versiconal hemiacetal acetate (VHA) by moxY. VHA is then the substrate for the versiconal hemiacetal acetate esterase est1 to yield versiconal (VAL). Versicolorin B synthase vbsA then converts VAL to versicolorin B (VERB) by closing the bisfuran ring. Then, the activity of the versicolorin B desaturase verB leads to versicolorin A (VERA). DotB, a predicted chloroperoxidase, may perform epoxidation of the A-ring of VERA. Alternatively, a cytochrome P450, such as cypX or avnA could catalyze this step. It is also possible that another, uncharacterized, cytochrome P450 enzyme is responsible for this step. Opening of the epoxide could potentially be achieved by the epoxide hydrolase epoA. However, epoA seems not to be required for DOTH biosynthesis, but other epoxide hydrolases may have the ability to complement this hydrolysis. Alternatively, opening of the epoxide ring could be achieved non-enzymatically. The next step is the deoxygenation of ring A to yield the 5,8-dihydroxyanthraquinone which is most likely catalyzed by the NADPH dehydrogenase encoded by ver1. The last stages of DOTH biosynthesis are proposed to involve hydroxylation of the bisfuran. OrdB and norB might have oxidative roles here. An alternative possibility is that cytochrome P450 monoogenases such as avnA and cypX might perform these steps in addition to previously proposed steps. This is Averufin oxidase A from Dothistroma septosporum (Red band needle blight fungus).